Here is a 450-residue protein sequence, read N- to C-terminus: Phosphoglucosamine mutase (450 aa).

Catalysis depends on serine 101, which acts as the Phosphoserine intermediate. Serine 101, aspartate 243, aspartate 245, and aspartate 247 together coordinate Mg(2+). A Phosphoserine modification is found at serine 101.

This sequence belongs to the phosphohexose mutase family. Mg(2+) serves as cofactor. Post-translationally, activated by phosphorylation.

The catalysed reaction is alpha-D-glucosamine 1-phosphate = D-glucosamine 6-phosphate. Catalyzes the conversion of glucosamine-6-phosphate to glucosamine-1-phosphate. In Desulfotalea psychrophila (strain LSv54 / DSM 12343), this protein is Phosphoglucosamine mutase.